The chain runs to 328 residues: Olfactory receptor 2AJ1 (328 aa).

The Extracellular portion of the chain corresponds to 1 to 25 (MGHQNHTFSSDFILLGLFSSSPTSV). N5 carries an N-linked (GlcNAc...) asparagine glycan. A helical membrane pass occupies residues 26-49 (VFFLVLFVIFIMSVTENTLMILLI). At 50 to 57 (RSDSRLHT) the chain is on the cytoplasmic side. A helical membrane pass occupies residues 58-79 (PMYFLLSHLSLMDILHVSNIVP). Residues 80–100 (KMVTNFLSGSRTISFAGCGFQ) are Extracellular-facing. Residues C97 and C189 are joined by a disulfide bond. The chain crosses the membrane as a helical span at residues 101-120 (VFLSLTLLGGECLLLAAMSC). Over 121–139 (DRYVAICHPLRYPILMKEY) the chain is Cytoplasmic. A helical transmembrane segment spans residues 140-158 (ASALMAGGSWLIGVFNSTV). Residues 159–195 (HTAYALQFPFCGSRAIDHFFCEVPAMLKLSCADTTRY) lie on the Extracellular side of the membrane. The helical transmembrane segment at 196–219 (ERGVCVSAVIFLLIPFSLISASYG) threads the bilayer. Over 220-236 (QIILTVLQMKSSEARKK) the chain is Cytoplasmic. The chain crosses the membrane as a helical span at residues 237–259 (SFSTCSFHMIVVTMYYGPFIFTY). Topologically, residues 260-272 (MRPKSYHTPGQDK) are extracellular. The helical transmembrane segment at 273 to 292 (FLAIFYTILTPTLNPFIYSF) threads the bilayer. The Cytoplasmic portion of the chain corresponds to 293–328 (RNKDVLAVMKNMLKSNFLHKKMNRKIPECVFCLFLC).

The protein belongs to the G-protein coupled receptor 1 family.

It localises to the cell membrane. In terms of biological role, odorant receptor. The protein is Olfactory receptor 2AJ1 (OR2AJ1) of Homo sapiens (Human).